The chain runs to 251 residues: Ubiquinone/menaquinone biosynthesis C-methyltransferase UbiE (251 aa).

Residues Thr-74, Asp-95, 123-124, and Ser-140 contribute to the S-adenosyl-L-methionine site; that span reads NA.

This sequence belongs to the class I-like SAM-binding methyltransferase superfamily. MenG/UbiE family.

The enzyme catalyses a 2-demethylmenaquinol + S-adenosyl-L-methionine = a menaquinol + S-adenosyl-L-homocysteine + H(+). The catalysed reaction is a 2-methoxy-6-(all-trans-polyprenyl)benzene-1,4-diol + S-adenosyl-L-methionine = a 5-methoxy-2-methyl-3-(all-trans-polyprenyl)benzene-1,4-diol + S-adenosyl-L-homocysteine + H(+). Its pathway is quinol/quinone metabolism; menaquinone biosynthesis; menaquinol from 1,4-dihydroxy-2-naphthoate: step 2/2. It participates in cofactor biosynthesis; ubiquinone biosynthesis. Its function is as follows. Methyltransferase required for the conversion of demethylmenaquinol (DMKH2) to menaquinol (MKH2) and the conversion of 2-polyprenyl-6-methoxy-1,4-benzoquinol (DDMQH2) to 2-polyprenyl-3-methyl-6-methoxy-1,4-benzoquinol (DMQH2). The chain is Ubiquinone/menaquinone biosynthesis C-methyltransferase UbiE from Photorhabdus laumondii subsp. laumondii (strain DSM 15139 / CIP 105565 / TT01) (Photorhabdus luminescens subsp. laumondii).